The following is a 116-amino-acid chain: Large ribosomal subunit protein bL17 (116 aa).

The protein belongs to the bacterial ribosomal protein bL17 family. In terms of assembly, part of the 50S ribosomal subunit. Contacts protein L32.

The protein is Large ribosomal subunit protein bL17 of Microcystis aeruginosa (strain NIES-843 / IAM M-2473).